Reading from the N-terminus, the 639-residue chain is UvrABC system protein C (639 aa).

Residues 20-97 (ERSGVYRMFD…IKKFQPKFNI (78 aa)) enclose the GIY-YIG domain. Residues 207 to 242 (KELQENLSRKMEELSSQMRFEEAAEIRDRIKALSYV) form the UVR domain.

Belongs to the UvrC family. Interacts with UvrB in an incision complex.

It localises to the cytoplasm. Its function is as follows. The UvrABC repair system catalyzes the recognition and processing of DNA lesions. UvrC both incises the 5' and 3' sides of the lesion. The N-terminal half is responsible for the 3' incision and the C-terminal half is responsible for the 5' incision. The chain is UvrABC system protein C from Rickettsia africae (strain ESF-5).